The chain runs to 97 residues: Aspartyl/glutamyl-tRNA(Asn/Gln) amidotransferase subunit C (97 aa).

Belongs to the GatC family. In terms of assembly, heterotrimer of A, B and C subunits.

The enzyme catalyses L-glutamyl-tRNA(Gln) + L-glutamine + ATP + H2O = L-glutaminyl-tRNA(Gln) + L-glutamate + ADP + phosphate + H(+). The catalysed reaction is L-aspartyl-tRNA(Asn) + L-glutamine + ATP + H2O = L-asparaginyl-tRNA(Asn) + L-glutamate + ADP + phosphate + 2 H(+). Its function is as follows. Allows the formation of correctly charged Asn-tRNA(Asn) or Gln-tRNA(Gln) through the transamidation of misacylated Asp-tRNA(Asn) or Glu-tRNA(Gln) in organisms which lack either or both of asparaginyl-tRNA or glutaminyl-tRNA synthetases. The reaction takes place in the presence of glutamine and ATP through an activated phospho-Asp-tRNA(Asn) or phospho-Glu-tRNA(Gln). The polypeptide is Aspartyl/glutamyl-tRNA(Asn/Gln) amidotransferase subunit C (Parasynechococcus marenigrum (strain WH8102)).